Reading from the N-terminus, the 215-residue chain is 3-isopropylmalate dehydratase small subunit (215 aa).

The protein belongs to the LeuD family. LeuD type 1 subfamily. As to quaternary structure, heterodimer of LeuC and LeuD.

The enzyme catalyses (2R,3S)-3-isopropylmalate = (2S)-2-isopropylmalate. Its pathway is amino-acid biosynthesis; L-leucine biosynthesis; L-leucine from 3-methyl-2-oxobutanoate: step 2/4. Its function is as follows. Catalyzes the isomerization between 2-isopropylmalate and 3-isopropylmalate, via the formation of 2-isopropylmaleate. This Xanthomonas campestris pv. campestris (strain 8004) protein is 3-isopropylmalate dehydratase small subunit.